Consider the following 226-residue polypeptide: X-linked lymphocyte-regulated protein 3A (226 aa).

A compositionally biased stretch (basic and acidic residues) spans Met1 to Met18. A disordered region spans residues Met1–Pro72. A compositionally biased stretch (polar residues) spans Asn21–Pro30. Basic and acidic residues-rich tracts occupy residues Glu39–Ile48 and Gln56–Leu65. Residues Glu155 to Gln210 adopt a coiled-coil conformation.

The protein belongs to the XLR/SYCP3 family. Expressed in lymphoid cells.

The polypeptide is X-linked lymphocyte-regulated protein 3A (Xlr3a) (Mus musculus (Mouse)).